Here is a 1667-residue protein sequence, read N- to C-terminus: Myomesin-1 (1667 aa).

A phosphoserine mark is found at serine 124 and serine 142. Over residues 192–210 (SKQSTASKQSATSKRTTST) the composition is skewed to low complexity. The tract at residues 192–217 (SKQSTASKQSATSKRTTSTLQREETF) is disordered. 2 consecutive Ig-like C2-type domains span residues 258–349 (PEFI…ASVV) and 376–478 (PYGY…AYVF). Fibronectin type-III domains follow at residues 492–587 (APLD…ALDP), 620–714 (PPTD…VVGD), and 721–814 (APGK…VKAA). Positions 818–915 (GVSPDVWPQL…PKKKKDPVAV (98 aa)) are disordered. Residues serine 863 and serine 867 each carry the phosphoserine modification. Residues 885–894 (EPLSSPPQEA) are compositionally biased toward low complexity. 2 Fibronectin type-III domains span residues 918–1016 (APYD…CEEW) and 1023–1122 (PPHS…TRPG). A Phosphoserine modification is found at serine 1036. 3 consecutive Ig-like C2-type domains span residues 1114 to 1212 (PVVA…EEMK), 1340 to 1426 (PHFA…LKLV), and 1555 to 1644 (RVLG…FTVS).

In terms of assembly, homodimer. Interacts with TTN/titin and PNKD. As to expression, ubiquitously expressed in all striated muscles. Expressed in all fiber types.

The protein resides in the cytoplasm. It localises to the myofibril. Its subcellular location is the sarcomere. It is found in the m line. Its function is as follows. May link the intermediate filament cytoskeleton to the M-disk of the myofibrils in striated muscle. May also contact myosin filaments. Also binds beta-integrins. This chain is Myomesin-1 (Myom1), found in Mus musculus (Mouse).